The chain runs to 660 residues: Genome-linked protein precursor (660 aa).

An N-terminal signal peptide occupies residues 1–25; that stretch reads MALLGIKLMTLVFAAWLSCCHSSSA. A run of 2 helical transmembrane segments spans residues 131-151 and 165-185; these read AVGM…LVVY and AVCV…ISWI. In terms of domain architecture, Peptidase S39 spans 224–416; it reads VEGYKPFIIP…GLTSPDFKFE (193 aa). Active-site for protease activity residues include H272, D304, and S373. Disordered regions lie at residues 463–490 and 595–660; these read EEES…GCPP and TKAP…AWVR.

This sequence belongs to the peptidase S39B family.

Its subcellular location is the host membrane. Functionally, precursor from which the VPg molecule is probably released at the onset of the RNA synthesis. Essential for virus replication. The chain is Genome-linked protein precursor from Euphorbia pulcherrima (Poinsettia).